A 380-amino-acid polypeptide reads, in one-letter code: MAPNIRKSHPLLKMINNSLIDLPTPSNISAWWNFGSLLAVCFMTQIITGLLLAMHYTADTSLAFSSVAHTCRNVQYGWLIRNLHANGASFFFICIYLHIGRGLYYGSYLYKETWNTGVILLLTLMATAFVGYVLPWGQMSFWGATVITNLFSAIPYIGQTLVEWAWGGFSVDNPTLTRFFALHFLLPFVIAGITIIHLTFLHESGSNNPLGISSNSDKIPFHPYYSIKDILGLTLMLTPLLTLALFSPNLLGDPENFTPANPLVTPPHIKPEWYFLFAYAILRSIPNKLGGVLALAASVLILLLIPFLHKSKQRTMTFRPFSQLLFWLLVANLLILTWVGSQPVEHPFIIIGQLASLSYFTTLLILFPMIGTLENKMLNH.

4 helical membrane-spanning segments follow: residues 34–54, 78–99, 114–134, and 179–199; these read FGSL…LLAM, WLIR…YLHI, WNTG…GYVL, and FFAL…IHLT. 2 residues coordinate heme b: H84 and H98. The heme b site is built by H183 and H197. Residue H202 participates in a ubiquinone binding. 4 helical membrane passes run 227 to 247, 289 to 309, 321 to 341, and 348 to 368; these read IKDI…ALFS, LGGV…PFLH, FSQL…WVGS, and FIII…ILFP.

Belongs to the cytochrome b family. In terms of assembly, the cytochrome bc1 complex contains 11 subunits: 3 respiratory subunits (MT-CYB, CYC1 and UQCRFS1), 2 core proteins (UQCRC1 and UQCRC2) and 6 low-molecular weight proteins (UQCRH/QCR6, UQCRB/QCR7, UQCRQ/QCR8, UQCR10/QCR9, UQCR11/QCR10 and a cleavage product of UQCRFS1). This cytochrome bc1 complex then forms a dimer. Heme b serves as cofactor.

The protein localises to the mitochondrion inner membrane. Component of the ubiquinol-cytochrome c reductase complex (complex III or cytochrome b-c1 complex) that is part of the mitochondrial respiratory chain. The b-c1 complex mediates electron transfer from ubiquinol to cytochrome c. Contributes to the generation of a proton gradient across the mitochondrial membrane that is then used for ATP synthesis. The polypeptide is Cytochrome b (MT-CYB) (Numida meleagris (Helmeted guineafowl)).